A 73-amino-acid chain; its full sequence is MQYKTFLVIFLAYLLVTEEALAFWGALAKGALKLIPSLVSSFTKKDKRALKNIFDPYQKNLDLELERLLSQLQ.

The first 22 residues, Met1–Ala22, serve as a signal peptide directing secretion. Positions Lys47–Gln73 are excised as a propeptide.

Belongs to the non-disulfide-bridged peptide (NDBP) superfamily. Medium-length antimicrobial peptide (group 3) family. In terms of tissue distribution, expressed by the venom gland.

Its subcellular location is the secreted. The protein localises to the target cell membrane. Its function is as follows. Amphipathic peptide with potent activities against Gram-positive bacteria (MIC=5.6-30.0 uM) and weaker activities against the tested Gram-negative bacteria (MIC=15 uM to &gt;45 uM). It has high hemolytic activity against human erythrocytes. May act by disrupting the integrity of the bacterial cell membrane. The protein is Heterin-2 of Heterometrus spinifer (Asia giant forest scorpion).